The following is a 144-amino-acid chain: 6-pyruvoyl tetrahydrobiopterin synthase (144 aa).

The residue at position 18 (serine 18) is a Phosphoserine. Histidine 23 contributes to the Zn(2+) binding site. Serine 27 is subject to Phosphoserine. The active-site Proton acceptor is the cysteine 42. Zn(2+) is bound by residues histidine 48 and histidine 50. Histidine 89 functions as the Charge relay system in the catalytic mechanism. Tyrosine 127 is subject to Phosphotyrosine. Glutamate 133 (charge relay system) is an active-site residue.

It belongs to the PTPS family. In terms of assembly, homodimer. Homohexamer formed of two homotrimers in a head to head fashion. It depends on Zn(2+) as a cofactor. Phosphorylation of Ser-18 is required for maximal enzyme activity.

The catalysed reaction is 7,8-dihydroneopterin 3'-triphosphate = 6-pyruvoyl-5,6,7,8-tetrahydropterin + triphosphate + H(+). It participates in cofactor biosynthesis; tetrahydrobiopterin biosynthesis; tetrahydrobiopterin from 7,8-dihydroneopterin triphosphate: step 1/3. Its function is as follows. Involved in the biosynthesis of tetrahydrobiopterin, an essential cofactor of aromatic amino acid hydroxylases. Catalyzes the transformation of 7,8-dihydroneopterin triphosphate into 6-pyruvoyl tetrahydropterin. This is 6-pyruvoyl tetrahydrobiopterin synthase from Mus musculus (Mouse).